Here is a 278-residue protein sequence, read N- to C-terminus: Protoheme IX farnesyltransferase (278 aa).

A run of 9 helical transmembrane segments spans residues 12 to 32 (VIWL…QTVD), 33 to 53 (WSKL…SAAF), 83 to 103 (ALVY…YLLG), 105 to 125 (LPGL…TIWL), 130 to 150 (WLNI…GYAL), 157 to 177 (LPAV…IWAL), 204 to 224 (VIIS…YLAF), 228 to 248 (LLGL…SILA), and 257 to 277 (MWKM…ALVF).

Belongs to the UbiA prenyltransferase family. Protoheme IX farnesyltransferase subfamily.

Its subcellular location is the cell membrane. It carries out the reaction heme b + (2E,6E)-farnesyl diphosphate + H2O = Fe(II)-heme o + diphosphate. The protein operates within porphyrin-containing compound metabolism; heme O biosynthesis; heme O from protoheme: step 1/1. Converts heme B (protoheme IX) to heme O by substitution of the vinyl group on carbon 2 of heme B porphyrin ring with a hydroxyethyl farnesyl side group. The protein is Protoheme IX farnesyltransferase of Pyrobaculum islandicum (strain DSM 4184 / JCM 9189 / GEO3).